We begin with the raw amino-acid sequence, 407 residues long: 45 kDa calcium-binding protein (407 aa).

The N-terminal stretch at 1–35 (MVWSWVAMASRWGPLVGLAPRCLWLLGAVLLMDAS) is a signal peptide. Residue Asn-40 is glycosylated (N-linked (GlcNAc...) asparagine). EF-hand domains are found at residues 98–133 (RSRR…KTAE) and 137–172 (EAME…SKGH). Ser-99 carries the phosphoserine modification. Ca(2+) contacts are provided by Asp-111, Asn-113, Asp-115, Lys-117, Glu-122, Asp-150, Asp-152, Asp-154, His-156, and Glu-161. Phosphothreonine occurs at positions 193 and 217. Residues 249–259 (GSSLAGAPGPG) show a composition bias toward low complexity. A disordered region spans residues 249–282 (GSSLAGAPGPGDQRQGPGIAGKSGKVLREPQPGC). Ca(2+) is bound by residues Asp-291, Asp-293, Asp-295, Gln-297, and Glu-302. EF-hand domains lie at 291-313 (DQDG…TVEN), 323-358 (WVKD…MNEY), and 359-394 (NALN…FTGS). Thr-310 bears the Phosphothreonine mark. Positions 336, 338, and 340 each coordinate Ca(2+). Position 344 is a phosphothreonine (Thr-344). Ca(2+) contacts are provided by Glu-347, Asp-372, Asn-374, Asn-376, His-378, and Glu-383. Residues 354-407 (PMNEYNALNEAKQMIAVADENQNHHLEPEEVLKYSEFFTGSKLVDYARSVHEEF) form a necessary for intracellular retention in Golgi apparatus lumen region.

The protein belongs to the CREC family.

The protein resides in the golgi apparatus lumen. Its function is as follows. May regulate calcium-dependent activities in the endoplasmic reticulum lumen or post-ER compartment. In Macaca fascicularis (Crab-eating macaque), this protein is 45 kDa calcium-binding protein (SDF4).